The following is a 335-amino-acid chain: Vitamin B12 import system permease protein BtuC (335 aa).

8 consecutive transmembrane segments (helical) span residues 25-45, 67-87, 94-113, 117-139, 153-173, 243-263, 281-301, and 309-329; these read LVVM…VWIW, MAVI…QALF, PGLL…AVLL, LLPI…SILL, LLVG…AVYF, VLAI…ISFI, RLLA…DVVA, and ELPI…WLLI.

It belongs to the binding-protein-dependent transport system permease family. FecCD subfamily. As to quaternary structure, the complex is composed of two ATP-binding proteins (BtuD), two transmembrane proteins (BtuC) and a solute-binding protein (BtuF).

The protein localises to the cell inner membrane. Its function is as follows. Part of the ABC transporter complex BtuCDF involved in vitamin B12 import. Involved in the translocation of the substrate across the membrane. The protein is Vitamin B12 import system permease protein BtuC of Yersinia pseudotuberculosis serotype O:1b (strain IP 31758).